The chain runs to 233 residues: Pyridoxal phosphate homeostasis protein (233 aa).

N6-(pyridoxal phosphate)lysine is present on lysine 35.

It belongs to the pyridoxal phosphate-binding protein YggS/PROSC family.

Its function is as follows. Pyridoxal 5'-phosphate (PLP)-binding protein, which is involved in PLP homeostasis. The chain is Pyridoxal phosphate homeostasis protein from Pasteurella multocida (strain Pm70).